The primary structure comprises 754 residues: Phosphoribosylformylglycinamidine synthase subunit PurL (754 aa).

The active site involves histidine 54. 2 residues coordinate ATP: tyrosine 57 and lysine 101. Glutamate 103 serves as a coordination point for Mg(2+). Substrate contacts are provided by residues 104 to 107 and arginine 126; that span reads SHNH. Histidine 105 serves as the catalytic Proton acceptor. Aspartate 127 is a binding site for Mg(2+). Glutamine 252 lines the substrate pocket. Mg(2+) is bound at residue aspartate 280. A substrate-binding site is contributed by 324–326; that stretch reads ESQ. The tract at residues 386–412 is disordered; that stretch reads PVYQRPVSRPESQEALNADSSKGLPRP. The ATP site is built by asparagine 512 and glycine 549. Asparagine 550 contributes to the Mg(2+) binding site. Residue serine 552 participates in substrate binding.

This sequence belongs to the FGAMS family. As to quaternary structure, monomer. Part of the FGAM synthase complex composed of 1 PurL, 1 PurQ and 2 PurS subunits.

It is found in the cytoplasm. It catalyses the reaction N(2)-formyl-N(1)-(5-phospho-beta-D-ribosyl)glycinamide + L-glutamine + ATP + H2O = 2-formamido-N(1)-(5-O-phospho-beta-D-ribosyl)acetamidine + L-glutamate + ADP + phosphate + H(+). Its pathway is purine metabolism; IMP biosynthesis via de novo pathway; 5-amino-1-(5-phospho-D-ribosyl)imidazole from N(2)-formyl-N(1)-(5-phospho-D-ribosyl)glycinamide: step 1/2. Part of the phosphoribosylformylglycinamidine synthase complex involved in the purines biosynthetic pathway. Catalyzes the ATP-dependent conversion of formylglycinamide ribonucleotide (FGAR) and glutamine to yield formylglycinamidine ribonucleotide (FGAM) and glutamate. The FGAM synthase complex is composed of three subunits. PurQ produces an ammonia molecule by converting glutamine to glutamate. PurL transfers the ammonia molecule to FGAR to form FGAM in an ATP-dependent manner. PurS interacts with PurQ and PurL and is thought to assist in the transfer of the ammonia molecule from PurQ to PurL. The polypeptide is Phosphoribosylformylglycinamidine synthase subunit PurL (Mycobacterium leprae (strain Br4923)).